The following is a 284-amino-acid chain: Polyamine aminopropyltransferase (284 aa).

The PABS domain occupies 2-237 (ELWYTEKHTE…GHWLFGFASK (236 aa)). Q31 contributes to the S-methyl-5'-thioadenosine binding site. 2 residues coordinate spermidine: H62 and D86. S-methyl-5'-thioadenosine-binding positions include E106 and 137 to 138 (DG). Catalysis depends on D155, which acts as the Proton acceptor. 155 to 158 (DSTD) contributes to the spermidine binding site. P162 serves as a coordination point for S-methyl-5'-thioadenosine.

This sequence belongs to the spermidine/spermine synthase family. As to quaternary structure, homodimer or homotetramer.

It localises to the cytoplasm. It catalyses the reaction S-adenosyl 3-(methylsulfanyl)propylamine + putrescine = S-methyl-5'-thioadenosine + spermidine + H(+). The protein operates within amine and polyamine biosynthesis; spermidine biosynthesis; spermidine from putrescine: step 1/1. In terms of biological role, catalyzes the irreversible transfer of a propylamine group from the amino donor S-adenosylmethioninamine (decarboxy-AdoMet) to putrescine (1,4-diaminobutane) to yield spermidine. The polypeptide is Polyamine aminopropyltransferase (Clostridium botulinum (strain Alaska E43 / Type E3)).